Reading from the N-terminus, the 252-residue chain is Fructose-1,6-bisphosphatase/inositol-1-monophosphatase (252 aa).

Residues Glu-65, Asp-81, Ile-83, and Asp-84 each contribute to the Mg(2+) site. Residues 84–86 (DGS), Arg-170, Phe-175, and Arg-194 each bind substrate. Residue Asp-201 participates in Mg(2+) binding.

This sequence belongs to the inositol monophosphatase superfamily. FBPase class 4 family. In terms of assembly, homodimer. Requires Mg(2+) as cofactor.

The catalysed reaction is beta-D-fructose 1,6-bisphosphate + H2O = beta-D-fructose 6-phosphate + phosphate. It catalyses the reaction a myo-inositol phosphate + H2O = myo-inositol + phosphate. IMPase activity is inhibited by Ca(2+) and Zn(2+). In contrast to mammalian I-1-P phosphatases, is not inhibited by Li(+) up to 100 mM. Phosphatase with broad specificity; it can dephosphorylate fructose 1,6-bisphosphate, both D and L isomers of inositol-1-phosphate (I-1-P), 2'-AMP, pNPP, beta-glycerol phosphate, and alpha-D-glucose-1-phosphate. Cannot hydrolyze glucose-6-phosphate, fructose-6-phosphate, NAD(+) or 5'-AMP. May be involved in the biosynthesis of a unique osmolyte, di-myo-inositol 1,1-phosphate. This chain is Fructose-1,6-bisphosphatase/inositol-1-monophosphatase (suhB), found in Methanocaldococcus jannaschii (strain ATCC 43067 / DSM 2661 / JAL-1 / JCM 10045 / NBRC 100440) (Methanococcus jannaschii).